A 1228-amino-acid chain; its full sequence is P3N-PIPO polyprotein (1228 aa).

Residues 408–547 enclose the Peptidase S30 domain; sequence IVGNSKINYI…RSVYAKMDQY (140 aa). Residues histidine 456, aspartate 465, and serine 499 each act as for P1 proteinase activity in the active site. An Involved in interaction with stylet and aphid transmission motif is present at residues 598 to 601; sequence KITC. An Involved in virions binding and aphid transmission motif is present at residues 856 to 858; the sequence is PTK. In terms of domain architecture, Peptidase C6 spans 882–1004; the sequence is MYIAKKGYCY…DSEMKHYIVG (123 aa). Catalysis depends on for helper component proteinase activity residues cysteine 890 and histidine 963.

This sequence belongs to the potyviridae P3N-PIPO polyprotein family. As to quaternary structure, interacts (via PIPO domain) with host PCaP1 protein; this interaction may help to anchor the movement complex to the plasma membrane from which the complex could move to the plasmodesmata. Post-translationally, potyviral RNA is expressed as two polyproteins which undergo post-translational proteolytic processing. Genome polyprotein is processed by NIa-pro, P1 and HC-pro proteinases resulting in the production of at least ten individual proteins. P3N-PIPO is cleaved by P1 and HC-pro proteinases resulting in the production of three individual proteins. The P1 proteinase and the HC-pro cleave only their respective C-termini autocatalytically.

The protein resides in the host cell junction. The protein localises to the host plasmodesma. The catalysed reaction is Hydrolyzes a Gly-|-Gly bond at its own C-terminus, commonly in the sequence -Tyr-Xaa-Val-Gly-|-Gly, in the processing of the potyviral polyprotein.. Its function is as follows. Required for aphid transmission and also has proteolytic activity. Only cleaves a Gly-Gly dipeptide at its own C-terminus. Interacts with virions and aphid stylets. Acts as a suppressor of RNA-mediated gene silencing, also known as post-transcriptional gene silencing (PTGS), a mechanism of plant viral defense that limits the accumulation of viral RNAs. May have RNA-binding activity. Allows efficient cell to cell propagation, by bypassing the host cell wall barrier. Transports viral genome to neighboring plant cells directly through plasmosdesmata, without any budding. The protein is P3N-PIPO polyprotein of Carica papaya (Papaya).